The chain runs to 89 residues: MFLALTSIAIPAAIVIPISLIANLPNCGISLTFSMTIGFVGLILTIAASPVFKNCGFSSMTCPVLGSNFFNNSMNVHATCAVCAWKTGV.

The next 2 helical transmembrane spans lie at 1-21 and 28-48; these read MFLA…ISLI and GISL…TIAA.

The protein localises to the cell membrane. This is an uncharacterized protein from Methanocaldococcus jannaschii (strain ATCC 43067 / DSM 2661 / JAL-1 / JCM 10045 / NBRC 100440) (Methanococcus jannaschii).